We begin with the raw amino-acid sequence, 402 residues long: MIDRQQILNELISPNSSKIVLLVMDGIGDIPGEDGLTPLQKANTPKLDELAKQSDLGQTIPVLPGITPGSGPGHLGIFGYDPLKYQIGRGILEALGIDVEVGEKDLVARGNFATLEGDIIVDRRAGRPSSEESAKVVEILNENIHKIEDVEVKFYPGKEHRFVVKLTGEGLYDKLEDADPQKEGKPIKYTKALDESSKKSEKIINILIDRIKEVLKDQQKMNFALLRGFSKYPNLPSFGDVYKLRPAAIAVYPMYKGLAKLVGMEILKTGQTIEDEFKTVKENWEKYDFFYVHVKKTDSYGEDGNFESKVKVIEEVDKNLGLLLELKPDVLIVTGDHSTPCAMKGHSFHPVPLMIYSKFTRKGLSKLYNEFECARGTLGTIPAVDVMSLALAYAGRLEKYGA.

This sequence belongs to the BPG-independent phosphoglycerate mutase family. A-PGAM subfamily.

It catalyses the reaction (2R)-2-phosphoglycerate = (2R)-3-phosphoglycerate. It participates in carbohydrate degradation; glycolysis; pyruvate from D-glyceraldehyde 3-phosphate: step 3/5. Functionally, catalyzes the interconversion of 2-phosphoglycerate and 3-phosphoglycerate. This is Probable 2,3-bisphosphoglycerate-independent phosphoglycerate mutase from Thermosipho melanesiensis (strain DSM 12029 / CIP 104789 / BI429).